Consider the following 417-residue polypeptide: Gamma-glutamyl phosphate reductase (417 aa).

This sequence belongs to the gamma-glutamyl phosphate reductase family.

Its subcellular location is the cytoplasm. It carries out the reaction L-glutamate 5-semialdehyde + phosphate + NADP(+) = L-glutamyl 5-phosphate + NADPH + H(+). Its pathway is amino-acid biosynthesis; L-proline biosynthesis; L-glutamate 5-semialdehyde from L-glutamate: step 2/2. In terms of biological role, catalyzes the NADPH-dependent reduction of L-glutamate 5-phosphate into L-glutamate 5-semialdehyde and phosphate. The product spontaneously undergoes cyclization to form 1-pyrroline-5-carboxylate. The sequence is that of Gamma-glutamyl phosphate reductase from Serratia marcescens.